The primary structure comprises 294 residues: NADH-cytochrome b5 reductase 1 (294 aa).

Residues 13 to 33 (PHASFLGGLVVAAILGLFIFF) form a helical membrane-spanning segment. The FAD-binding FR-type domain occupies 44 to 147 (VEWRSFKLVD…KGPKGKFVYT (104 aa)). FAD contacts are provided by residues 127-142 (SLLTIGQEIKVKGPKG) and 153-185 (HLVMIAGGTGITPMYQIIKSSIKTPGDKTRLSL).

The protein belongs to the flavoprotein pyridine nucleotide cytochrome reductase family. Monomer. Component of the 2-(3-amino-3-carboxypropyl)histidine synthase complex composed of DPH1, DPH2, DPH3 and a NADH-dependent reductase, predominantly CBR1. FAD is required as a cofactor.

The protein localises to the mitochondrion outer membrane. It catalyses the reaction 2 Fe(III)-[cytochrome b5] + NADH = 2 Fe(II)-[cytochrome b5] + NAD(+) + H(+). It carries out the reaction 2 Fe(3+)-[Dph3] + NADH = 2 Fe(2+)-[Dph3] + NAD(+) + H(+). It participates in protein modification; peptidyl-diphthamide biosynthesis. Its function is as follows. NADH-dependent reductase for DPH3 and cytochrome b5. Required for the first step of diphthamide biosynthesis, a post-translational modification of histidine which occurs in elongation factor 2. DPH1 and DPH2 transfer a 3-amino-3-carboxypropyl (ACP) group from S-adenosyl-L-methionine (SAM) to a histidine residue, the reaction is assisted by a reduction system comprising DPH3 and a NADH-dependent reductase, predominantly CBR1. By reducing DPH3, also involved in the formation of the tRNA wobble base modification mcm5s 2U (5-methoxycarbonylmethyl-2-thiouridine), mediated by the elongator complex. The cytochrome b5/NADH cytochrome b5 reductase electron transfer system supports the catalytic activity of several sterol biosynthetic enzymes. The chain is NADH-cytochrome b5 reductase 1 (CBR1) from Cryptococcus neoformans var. neoformans serotype D (strain B-3501A) (Filobasidiella neoformans).